We begin with the raw amino-acid sequence, 822 residues long: Serine/threonine-protein kinase kin-29 (822 aa).

The Protein kinase domain occupies Y16–M267. ATP is bound by residues I22–V30 and K45. D138 serves as the catalytic Proton acceptor. 3 disordered regions span residues E348–K367, L389–G423, and N577–P602. A compositionally biased stretch (acidic residues) spans C394–D406.

This sequence belongs to the protein kinase superfamily. CAMK Ser/Thr protein kinase family. SNF1 subfamily. Interacts with tax-6. The cofactor is Mg(2+). Post-translationally, autophosphorylated. Elevated cAMP levels appears to act via PKA to directly or indirectly phosphorylate multiple sites on kin-29 and inhibit function. In terms of tissue distribution, primarily neuronal, with additional expression in body wall muscle and hypodermal cells. Among neuronal cells, expressed in multiple sensory neurons and interneurons in the lateral, anterior, and lumbar ganglia, as well as in motor neurons in the ventral motor cord. Present in the AWB and AWC olfactory neurons.

The protein resides in the cytoplasm. Its subcellular location is the nucleus. It catalyses the reaction L-seryl-[protein] + ATP = O-phospho-L-seryl-[protein] + ADP + H(+). The enzyme catalyses L-threonyl-[protein] + ATP = O-phospho-L-threonyl-[protein] + ADP + H(+). In terms of biological role, regulates chemoreceptor expression by phosphorylating the hda-4 class II histone deacetylase (HDAC) and inhibiting the gene repression functions of hda-4 and the mef-2 transcription factor, enabling the correct sensing and transduction of food signals. Role in determining body size, the dauer decision and serotonin-mediated egg laying. May modulate the Sma/Mab pathway and regulates development in the later larval stages. The chain is Serine/threonine-protein kinase kin-29 from Caenorhabditis elegans.